Reading from the N-terminus, the 128-residue chain is Fluoride-specific ion channel FluC (128 aa).

4 helical membrane passes run 4 to 24 (VMGI…RYAI), 37 to 57 (FGTF…WSFF), 65 to 85 (TFRL…STFS), and 101 to 121 (FGYL…GFFI). Na(+) is bound by residues G76 and T79.

It belongs to the fluoride channel Fluc/FEX (TC 1.A.43) family.

It localises to the cell inner membrane. It catalyses the reaction fluoride(in) = fluoride(out). With respect to regulation, na(+) is not transported, but it plays an essential structural role and its presence is essential for fluoride channel function. Fluoride-specific ion channel. Important for reducing fluoride concentration in the cell, thus reducing its toxicity. The polypeptide is Fluoride-specific ion channel FluC (Desulfotalea psychrophila (strain LSv54 / DSM 12343)).